Consider the following 435-residue polypeptide: Nuclear hormone receptor family member nhr-28 (435 aa).

The segment at residues 5–80 (KKPCSVCGEA…VGMRKSAVQR (76 aa)) is a DNA-binding region (nuclear receptor). 2 consecutive NR C4-type zinc fingers follow at residues 8–28 (CSVC…CRAC) and 44–63 (CRAM…CRAC). Residues 84–106 (LFGRQDSSDGSNPRVSPSTSWPM) are disordered. Positions 91–104 (SDGSNPRVSPSTSW) are enriched in polar residues. Residues 113–374 (IEEPGMATLN…ETFYELVSGR (262 aa)) form the NR LBD domain.

This sequence belongs to the nuclear hormone receptor family.

It is found in the nucleus. In terms of biological role, orphan nuclear receptor. The protein is Nuclear hormone receptor family member nhr-28 of Caenorhabditis briggsae.